We begin with the raw amino-acid sequence, 474 residues long: uncharacterized protein (474 aa).

The segment covering 1–14 has biased composition (polar residues); it reads MGSRYPSHQLSNGL. Residues 1–137 form a disordered region; it reads MGSRYPSHQL…QSGGVTRQNS (137 aa). S45 is subject to Phosphoserine. 3 stretches are compositionally biased toward polar residues: residues 73-83, 97-113, and 125-137; these read RSGSFAGTAQS, SLASAGSVSMKKTNSGP, and SGPQSGGVTRQNS. S169 is modified (phosphoserine). 2 consecutive transmembrane segments (helical) span residues 210-230 and 236-256; these read VLWLVVLIFIMGFLAGGFILG and ILLVVVAILFTVVAALFIWNI.

It localises to the membrane. This is an uncharacterized protein from Arabidopsis thaliana (Mouse-ear cress).